We begin with the raw amino-acid sequence, 696 residues long: Interleukin-1 receptor accessory protein-like 1 (696 aa).

Positions 1-24 (MKAPIPHLILLYATFTQSLKVVTK) are cleaved as a signal peptide. The Ig-like C2-type 1 domain occupies 25 to 134 (RGSADGCTDW…YCMKVSISLT (110 aa)). At 25–357 (RGSADGCTDW…LLHKRELMYT (333 aa)) the chain is on the extracellular side. Intrachain disulfides connect cysteine 31/cysteine 126 and cysteine 53/cysteine 118. N-linked (GlcNAc...) asparagine glycans are attached at residues asparagine 63, asparagine 122, and asparagine 138. 2 cysteine pairs are disulfide-bonded: cysteine 143–cysteine 185 and cysteine 164–cysteine 216. Ig-like C2-type domains follow at residues 143-232 (CYNS…TELT) and 242-350 (PKLL…VLLH). Asparagine 213, asparagine 264, and asparagine 331 each carry an N-linked (GlcNAc...) asparagine glycan. The cysteines at positions 267 and 334 are disulfide-linked. The helical transmembrane segment at 358–378 (VELAGGLGAILLLLVCSVTIY) threads the bilayer. Residues 379 to 696 (KCYKIEIMLF…RETSISSVIW (318 aa)) lie on the Cytoplasmic side of the membrane. The region spanning 403–559 (KDYDAYLSYT…KFWKRLQYEM (157 aa)) is the TIR domain. The active site involves glutamate 491. The segment at 549 to 644 (SKFWKRLQYE…TGTLPLTSIG (96 aa)) is interaction with NCS1. The segment at 659–680 (GQRPQTKSSREPNPDEAHTNSA) is disordered. The segment covering 666–676 (SSREPNPDEAH) has biased composition (basic and acidic residues).

The protein belongs to the interleukin-1 receptor family. As to quaternary structure, homodimer. Interacts (calcium-independent) with NCS1/FREQ. Interacts (via the first immunoglobilin domain) with PTPRD (via the second immunoglobilin domain); this interaction is PTPRD-splicing-dependent and induces pre- and post-synaptic differentiation of neurons and is required for IL1RAPL1-mediated synapse formation.

It is found in the cell membrane. The protein localises to the cytoplasm. It localises to the cell projection. The protein resides in the axon. Its subcellular location is the dendrite. It catalyses the reaction NAD(+) + H2O = ADP-D-ribose + nicotinamide + H(+). Its function is as follows. May regulate secretion and presynaptic differentiation through inhibition of the activity of N-type voltage-gated calcium channel. May activate the MAP kinase JNK. Plays a role in neurite outgrowth. During dendritic spine formation can bidirectionally induce pre- and post-synaptic differentiation of neurons by trans-synaptically binding to PTPRD. The chain is Interleukin-1 receptor accessory protein-like 1 (Il1rapl1) from Rattus norvegicus (Rat).